A 366-amino-acid chain; its full sequence is Histidinol-phosphate aminotransferase 2 (366 aa).

Residues 1-11 (MQVKDQLSSLQ) show a composition bias toward polar residues. The interval 1 to 21 (MQVKDQLSSLQPYKPGKSPEQ) is disordered. Lys222 is subject to N6-(pyridoxal phosphate)lysine.

Belongs to the class-II pyridoxal-phosphate-dependent aminotransferase family. Histidinol-phosphate aminotransferase subfamily. In terms of assembly, homodimer. Pyridoxal 5'-phosphate serves as cofactor.

The enzyme catalyses L-histidinol phosphate + 2-oxoglutarate = 3-(imidazol-4-yl)-2-oxopropyl phosphate + L-glutamate. It participates in amino-acid biosynthesis; L-histidine biosynthesis; L-histidine from 5-phospho-alpha-D-ribose 1-diphosphate: step 7/9. The sequence is that of Histidinol-phosphate aminotransferase 2 (hisC2) from Bacillus cereus (strain ATCC 14579 / DSM 31 / CCUG 7414 / JCM 2152 / NBRC 15305 / NCIMB 9373 / NCTC 2599 / NRRL B-3711).